Reading from the N-terminus, the 351-residue chain is Ribosomal RNA large subunit methyltransferase M (351 aa).

S-adenosyl-L-methionine contacts are provided by residues S186, 219–222 (APGG), D238, D258, and D274. K303 (proton acceptor) is an active-site residue.

Belongs to the class I-like SAM-binding methyltransferase superfamily. RNA methyltransferase RlmE family. RlmM subfamily. Monomer.

It localises to the cytoplasm. It carries out the reaction cytidine(2498) in 23S rRNA + S-adenosyl-L-methionine = 2'-O-methylcytidine(2498) in 23S rRNA + S-adenosyl-L-homocysteine + H(+). Its function is as follows. Catalyzes the 2'-O-methylation at nucleotide C2498 in 23S rRNA. This Xylella fastidiosa (strain M23) protein is Ribosomal RNA large subunit methyltransferase M.